The following is a 159-amino-acid chain: S-ribosylhomocysteine lyase (159 aa).

H53, H57, and C124 together coordinate Fe cation.

Belongs to the LuxS family. As to quaternary structure, homodimer. Fe cation is required as a cofactor.

The catalysed reaction is S-(5-deoxy-D-ribos-5-yl)-L-homocysteine = (S)-4,5-dihydroxypentane-2,3-dione + L-homocysteine. Involved in the synthesis of autoinducer 2 (AI-2) which is secreted by bacteria and is used to communicate both the cell density and the metabolic potential of the environment. The regulation of gene expression in response to changes in cell density is called quorum sensing. Catalyzes the transformation of S-ribosylhomocysteine (RHC) to homocysteine (HC) and 4,5-dihydroxy-2,3-pentadione (DPD). In Porphyromonas gingivalis (strain ATCC BAA-308 / W83), this protein is S-ribosylhomocysteine lyase.